The sequence spans 264 residues: Tryptophan synthase alpha chain (264 aa).

Active-site proton acceptor residues include Glu49 and Asp60.

Belongs to the TrpA family. Tetramer of two alpha and two beta chains.

It carries out the reaction (1S,2R)-1-C-(indol-3-yl)glycerol 3-phosphate + L-serine = D-glyceraldehyde 3-phosphate + L-tryptophan + H2O. It participates in amino-acid biosynthesis; L-tryptophan biosynthesis; L-tryptophan from chorismate: step 5/5. In terms of biological role, the alpha subunit is responsible for the aldol cleavage of indoleglycerol phosphate to indole and glyceraldehyde 3-phosphate. This is Tryptophan synthase alpha chain from Picosynechococcus sp. (strain ATCC 27264 / PCC 7002 / PR-6) (Agmenellum quadruplicatum).